The sequence spans 131 residues: Small ribosomal subunit protein uS19 (131 aa).

The protein belongs to the universal ribosomal protein uS19 family.

Its function is as follows. Protein S19 forms a complex with S13 that binds strongly to the 16S ribosomal RNA. The polypeptide is Small ribosomal subunit protein uS19 (Nitrosopumilus maritimus (strain SCM1)).